Consider the following 522-residue polypeptide: FAD-dependent monooxygenase fsr3 (522 aa).

Residues 1–27 (MKNTQTNGTHPIIDKKPNGTLNGDHQE) are disordered. Arginine 164 serves as a coordination point for FAD. Residue arginine 245 is part of the active site. Residues aspartate 369 and alanine 382 each coordinate FAD.

This sequence belongs to the paxM FAD-dependent monooxygenase family. It depends on FAD as a cofactor.

Its pathway is polyketide biosynthesis. Its function is as follows. FAD-dependent monooxygenase; part of the gene cluster that mediates the biosynthesis of fusarubins, highly pigmented naphthoquinones responsible for the coloration of the fruiting bodies. The non-reducing polyketide synthase FSR1 is responsible for the condensation of seven acetyl-CoA units to yield a haptaketide. After rings A and B are formed by aldol-type cyclization, the PKS-derived product is released as 6-O-demethylfusarubinaldehyde. Then, two hydroxyl groups at C-5 and C-10 are incorporated by FSR3, and simultaneously hydroxyl groups at C-6 and C-8 are methylated by FSR2. The aldehyde is, on the one hand, reduced by FSR3 to 8-O-methylfusarubin alcohol, which equilibrates mainly with 8-O-methylfusarubin and only small amounts of 8-O-methylnectriafurone. On the other hand, the aldehyde can be oxidized to form 8-O-methylfusarubinic acid, a reaction driven by FSR3 equilibrating with 8-O-methylfusarubinlactone, finally resulting in 8-O-methylanhydrofusarubinlactol after a further reduction step and loss of water. 8-O-Methylfusarubinic acid can also undergo decarboxylation, resulting in 8-O-methyl-13-hydroxynorjavanicin after another hydroxylation step at C-13. Both steps are most likely also accomplished by FSR3. No enzymatic function has been determined so far for either FSR4 and FSR5. Their deletion does not alter the product spectrum, but the possibility that they catalyze specific enzymatic steps during perithecium development cannot be ruled out. FSR4 might possess a regulatory function in the biosynthesis of fusarubins. This Gibberella fujikuroi (strain CBS 195.34 / IMI 58289 / NRRL A-6831) (Bakanae and foot rot disease fungus) protein is FAD-dependent monooxygenase fsr3.